The chain runs to 556 residues: MGVCCSCFKRYEHDQSYPPLLAENEREAISSLLQYLENRSEVDFFTDGPLRALSTLVYSENIDLQRSAALAFAEVTEKDVRPVTRDVLEPILILLQSSDAEVQRAACAALGNLAVNDSNKVLIVNMGGLEPLIRQMMSPNIEVQCNAVGCITNLATQDQNKSKIATSGALIPLTKLAKSKDLRVQRNATGALLNMTHSLENRQELVNAGSVPILVQLLSSTDPDVQYYCTTALSNIAVDEGNRKKLASTEPKLISQLVQLMDSTSPRVQCQATLALRNLASDANYQLEIVRAGGLPNLVTLLNSTHQPLVLAAVACIRNISIHPLNEALIIDAGFLKPLVSLLDYNDNVEIQCHAVSTLRNLAASSERNRLALLESGAVEKCEKLVLNSPISVQSEISACFAILALADDLKMKLLDSNIIEVLLPLTSSENGEVCGNAAAALANLCSRIPDYTIILKNYEQISKFIAKFLNSQNPTFEHIALWTTLQLLESEDETIKAKLKKQINSGEISLNNLTTSTLNNHSDTSNIINNDGEEGEFNDGDDIINLTQQILEMIK.

Gly-2 is lipidated: N-myristoyl glycine. 3 S-palmitoyl cysteine lipidation sites follow: Cys-4, Cys-5, and Cys-7. ARM repeat units lie at residues Asn-38–Glu-74, Val-75–Val-115, Asp-117–Thr-156, Asp-158–His-197, Leu-199–Val-238, Asn-242–Ser-281, Ala-283–Ile-322, Pro-324–Ala-364, and Asp-408–Ser-447.

This sequence belongs to the beta-catenin family.

The protein resides in the vacuole membrane. Functionally, functions in both vacuole inheritance and protein targeting from the cytoplasm to vacuole. This Komagataella pastoris (Yeast) protein is Vacuolar protein 8 (VAC8).